We begin with the raw amino-acid sequence, 196 residues long: Beta-crystallin A4 (196 aa).

Thr2 bears the N-acetylthreonine mark. The tract at residues 2–11 (TLQCTKSAGP) is N-terminal arm. 2 Beta/gamma crystallin 'Greek key' domains span residues 12–51 (WKMV…KVLS) and 52–98 (GAWV…RPAA). The connecting peptide stretch occupies residues 99 to 104 (CANHRD). Beta/gamma crystallin 'Greek key' domains follow at residues 105–146 (SRLT…HVHS) and 147–195 (GAWV…RRIQ).

It belongs to the beta/gamma-crystallin family. As to quaternary structure, homo/heterodimer, or complexes of higher-order. The structure of beta-crystallin oligomers seems to be stabilized through interactions between the N-terminal arms.

Crystallins are the dominant structural components of the vertebrate eye lens. The sequence is that of Beta-crystallin A4 (CRYBA4) from Homo sapiens (Human).